Consider the following 275-residue polypeptide: COP9 signalosome complex subunit 7a (275 aa).

Ser-2 is modified (N-acetylserine). In terms of domain architecture, PCI spans 2 to 159; that stretch reads SAEVKVTGQN…QRLEVDYSIG (158 aa). A coiled-coil region spans residues 185-233; sequence LSGIEEQVSRANQHKEQQLGLKQQIESEVANLKKTIKVTTAAAAAATSQ. A disordered region spans residues 227–275; sequence AAAATSQDPEQHLTELREPAPGTNQRQPSKKASKGKGLRGSAKIWSKSN. Basic and acidic residues predominate over residues 235-244; the sequence is PEQHLTELRE. The span at 254 to 263 shows a compositional bias: basic residues; that stretch reads PSKKASKGKG.

The protein belongs to the CSN7/EIF3M family. CSN7 subfamily. As to quaternary structure, component of the CSN complex, composed of COPS1/GPS1, COPS2, COPS3, COPS4, COPS5, COPS6, COPS7 (COPS7A or COPS7B), COPS8 and COPS9. In the complex, it probably interacts directly with COPS1, COPS2, COPS4, COPS5, COPS6 and COPS8. Interacts with PMF1. Interacts with the translation initiation factor EIF3S6. Interacts with CK2 and PKD. Interacts directly with ID3. Post-translationally, phosphorylated by CK2 and PKD kinases.

The protein localises to the cytoplasm. Its subcellular location is the nucleus. Component of the COP9 signalosome complex (CSN), a complex involved in various cellular and developmental processes. The CSN complex is an essential regulator of the ubiquitin (Ubl) conjugation pathway by mediating the deneddylation of the cullin subunits of SCF-type E3 ligase complexes, leading to decrease the Ubl ligase activity of SCF-type complexes such as SCF, CSA or DDB2. The complex is also involved in phosphorylation of p53/TP53, JUN, I-kappa-B-alpha/NFKBIA, ITPK1 and IRF8/ICSBP, possibly via its association with CK2 and PKD kinases. CSN-dependent phosphorylation of TP53 and JUN promotes and protects degradation by the Ubl system, respectively. The chain is COP9 signalosome complex subunit 7a (COPS7A) from Pongo abelii (Sumatran orangutan).